We begin with the raw amino-acid sequence, 66 residues long: Large ribosomal subunit protein bL28 (66 aa).

Belongs to the bacterial ribosomal protein bL28 family.

The protein is Large ribosomal subunit protein bL28 of Oenococcus oeni (strain ATCC BAA-331 / PSU-1).